Consider the following 211-residue polypeptide: WUSCHEL-related homeobox 14 (211 aa).

Residues 91 to 155 (STRHRWTPTS…NRRARSKRKQ (65 aa)) constitute a DNA-binding region (homeobox; WUS-type). The tract at residues 147 to 183 (RRARSKRKQPQTTTANGQADDVAVTTEERRSCGDSGG) is disordered.

It belongs to the WUS homeobox family. Expressed in root vasculature, pericycle and stamen. Expressed in the procambium during stem maturation.

It localises to the nucleus. Its function is as follows. Acts redundantly with WOX4 downstream of the TDR/PXY receptor kinase to regulate procambial cell proliferation and differentiation in vascular tissue, independently of any role in vascular. Involved in the regulation of gibberellin (GA) biosynthesis pathway. Positively regulates the expression of the GA biosynthesis gene GA3OX1, and negatively regulates the expression of GA2OX1 during secondary growth, which increases bioactive GA content in the inflorescence stem. Promotes vascular cell differentiation in the inflorescence stem. Functionally, transcription factor which may be involved in developmental processes. The polypeptide is WUSCHEL-related homeobox 14 (WOX14) (Arabidopsis thaliana (Mouse-ear cress)).